The following is a 360-amino-acid chain: Phospho-N-acetylmuramoyl-pentapeptide-transferase (360 aa).

The Periplasmic portion of the chain corresponds to 1 to 25 (MLVWLAEHLVKYYSGFNVFSYLTFR). A helical transmembrane segment spans residues 26 to 46 (AIVSLLTALFISLWMGPRMIA). Over 47–71 (RLQKLSFGQVVRNDGPESHFSKRGT) the chain is Cytoplasmic. A helical transmembrane segment spans residues 72 to 92 (PTMGGIMILTSIVISVLLWAY). A topological domain (periplasmic) is located at residue proline 93. A helical membrane pass occupies residues 94 to 114 (SNPYVWCVLVVLIGYGIIGFV). The Cytoplasmic portion of the chain corresponds to 115 to 131 (DDYRKVVRKDTKGLIAR). A helical membrane pass occupies residues 132 to 152 (WKYFWMSVIALGVAFALYLVG). Topologically, residues 153 to 167 (KDTPATQLVVPFFKD) are periplasmic. Residues 168 to 188 (VMPQLGLFYILLSYFVIVGTG) traverse the membrane as a helical segment. Topologically, residues 189 to 198 (NAVNLTDGLD) are cytoplasmic. A helical transmembrane segment spans residues 199-219 (GLAIMPTVFVAAGFALVAWAT). Topologically, residues 220–235 (GNMNFANYLHIPYLRH) are periplasmic. Residues 236 to 256 (AGELVIVCTAIVGAGLGFLWF) form a helical membrane-spanning segment. The Cytoplasmic segment spans residues 257–262 (NTYPAQ). Residues 263–283 (VFMGDVGSLALGGALGIIAVL) form a helical membrane-spanning segment. Over 284–287 (LRQE) the chain is Periplasmic. The helical transmembrane segment at 288–308 (FLLVIMGGVFVVETLSVILQV) threads the bilayer. Residues 309–337 (GSFKLRGQRIFRMAPIHHHYELKGWPEPR) lie on the Cytoplasmic side of the membrane. A helical transmembrane segment spans residues 338 to 358 (VIVRFWIISLMLVLIGLATLK). Residues 359–360 (VR) lie on the Periplasmic side of the membrane.

The protein belongs to the glycosyltransferase 4 family. MraY subfamily. Mg(2+) is required as a cofactor.

The protein localises to the cell inner membrane. It catalyses the reaction UDP-N-acetyl-alpha-D-muramoyl-L-alanyl-gamma-D-glutamyl-meso-2,6-diaminopimeloyl-D-alanyl-D-alanine + di-trans,octa-cis-undecaprenyl phosphate = di-trans,octa-cis-undecaprenyl diphospho-N-acetyl-alpha-D-muramoyl-L-alanyl-D-glutamyl-meso-2,6-diaminopimeloyl-D-alanyl-D-alanine + UMP. It functions in the pathway cell wall biogenesis; peptidoglycan biosynthesis. Catalyzes the initial step of the lipid cycle reactions in the biosynthesis of the cell wall peptidoglycan: transfers peptidoglycan precursor phospho-MurNAc-pentapeptide from UDP-MurNAc-pentapeptide onto the lipid carrier undecaprenyl phosphate, yielding undecaprenyl-pyrophosphoryl-MurNAc-pentapeptide, known as lipid I. The chain is Phospho-N-acetylmuramoyl-pentapeptide-transferase from Salmonella gallinarum (strain 287/91 / NCTC 13346).